Consider the following 97-residue polypeptide: Osteocalcin (97 aa).

Residues 1-18 form the signal peptide; that stretch reads MKTLAFLVLCSLAAICLT. Positions 19-52 are excised as a propeptide; the sequence is SDASTGSQPASDNPADEGMFVERDQASAVVRQKR. The Gla domain maps to 53 to 93; it reads AAGQLSLTQLESLREVCELNLACEHMMDTEGIIAAYTAYYG. The Ca(2+) site is built by Glu63, Glu67, Glu70, and Glu76. Glu63, Glu67, and Glu70 each carry 4-carboxyglutamate. The cysteines at positions 69 and 75 are disulfide-linked.

This sequence belongs to the osteocalcin/matrix Gla protein family. Gamma-carboxyglutamate residues are formed by vitamin K dependent carboxylation by GGCX. These residues are essential for the binding of calcium.

Its subcellular location is the secreted. In terms of biological role, the carboxylated form is one of the main organic components of the bone matrix, which constitutes 1-2% of the total bone protein. The carboxylated form binds strongly to apatite and calcium. This chain is Osteocalcin (bglap), found in Sparus aurata (Gilthead sea bream).